Reading from the N-terminus, the 64-residue chain is Gallinacin-2 (64 aa).

Residues 1 to 22 (MRILYLLFSLLFLALQVSPGLS) form the signal peptide. A propeptide spanning residues 23–28 (SPRRDM) is cleaved from the precursor. Disulfide bonds link Cys31-Cys57, Cys36-Cys51, and Cys41-Cys58.

In terms of tissue distribution, expressed in circulating heterophil granulocytes and bone marrow (at protein level). Strong expression in the bone marrow, lung and testis. Moderate expression in the bursa and intestine. Low expression in the cloaca, gall bladder, brain, pancreas, trachea, air sacs and spleen. Expressed in the vagina, ovarian stroma and the theca layer of the ovarian follicle, but not in the granulosa layer of the ovarian follicle.

Its subcellular location is the secreted. The protein localises to the cytoplasmic granule. Its function is as follows. Potent antibacterial activity against the Gram-negative bacterium E.coli ML-35, and against the Gram-positive bacterium L.monocytogenes EGD. Lacks antifungal activity against C.albicans. This is Gallinacin-2 (GAL2) from Gallus gallus (Chicken).